The following is a 100-amino-acid chain: NADH-quinone oxidoreductase subunit K (100 aa).

Transmembrane regions (helical) follow at residues 4–24 (TSYYVLLSAILFTIGVLGVLL), 29–49 (IVVFMAVELMLNAANLALVAF), and 60–80 (VIVFFVITVAAAEVAVGLALL).

The protein belongs to the complex I subunit 4L family. In terms of assembly, NDH-1 is composed of 14 different subunits. Subunits NuoA, H, J, K, L, M, N constitute the membrane sector of the complex.

The protein localises to the cell membrane. The enzyme catalyses a quinone + NADH + 5 H(+)(in) = a quinol + NAD(+) + 4 H(+)(out). In terms of biological role, NDH-1 shuttles electrons from NADH, via FMN and iron-sulfur (Fe-S) centers, to quinones in the respiratory chain. The immediate electron acceptor for the enzyme in this species is believed to be ubiquinone. Couples the redox reaction to proton translocation (for every two electrons transferred, four hydrogen ions are translocated across the cytoplasmic membrane), and thus conserves the redox energy in a proton gradient. The chain is NADH-quinone oxidoreductase subunit K from Chloroflexus aurantiacus (strain ATCC 29366 / DSM 635 / J-10-fl).